The sequence spans 188 residues: ATP synthase subunit b (188 aa).

The chain crosses the membrane as a helical span at residues 7–26 (TAAAGAMTLFFASMAYASGD).

Belongs to the ATPase B chain family. In terms of assembly, F-type ATPases have 2 components, F(1) - the catalytic core - and F(0) - the membrane proton channel. F(1) has five subunits: alpha(3), beta(3), gamma(1), delta(1), epsilon(1). F(0) has three main subunits: a(1), b(2) and c(10-14). The alpha and beta chains form an alternating ring which encloses part of the gamma chain. F(1) is attached to F(0) by a central stalk formed by the gamma and epsilon chains, while a peripheral stalk is formed by the delta and b chains.

The protein localises to the cell inner membrane. F(1)F(0) ATP synthase produces ATP from ADP in the presence of a proton or sodium gradient. F-type ATPases consist of two structural domains, F(1) containing the extramembraneous catalytic core and F(0) containing the membrane proton channel, linked together by a central stalk and a peripheral stalk. During catalysis, ATP synthesis in the catalytic domain of F(1) is coupled via a rotary mechanism of the central stalk subunits to proton translocation. Its function is as follows. Component of the F(0) channel, it forms part of the peripheral stalk, linking F(1) to F(0). The sequence is that of ATP synthase subunit b from Nitratidesulfovibrio vulgaris (strain DP4) (Desulfovibrio vulgaris).